A 406-amino-acid polypeptide reads, in one-letter code: 2,3-bisphosphoglycerate-independent phosphoglycerate mutase (406 aa).

It belongs to the BPG-independent phosphoglycerate mutase family. A-PGAM subfamily.

It catalyses the reaction (2R)-2-phosphoglycerate = (2R)-3-phosphoglycerate. Its pathway is carbohydrate degradation; glycolysis; pyruvate from D-glyceraldehyde 3-phosphate: step 3/5. Functionally, catalyzes the interconversion of 2-phosphoglycerate and 3-phosphoglycerate. This Methanococcus vannielii (strain ATCC 35089 / DSM 1224 / JCM 13029 / OCM 148 / SB) protein is 2,3-bisphosphoglycerate-independent phosphoglycerate mutase.